A 591-amino-acid chain; its full sequence is ATP-dependent RNA helicase DDX55 (591 aa).

The Q motif signature appears at 9–37 (WSSLPVALSPGVLRALQDLGFDRMTPVQS). A Helicase ATP-binding domain is found at 40–223 (IPLFMSNKDV…RAGLRNPVRI (184 aa)). Residue 53–60 (AVTGSGKT) participates in ATP binding. The DEAD box motif lies at 171-174 (DEAD). Positions 254–402 (KFNQLVHFLR…EMQPQRNVLD (149 aa)) constitute a Helicase C-terminal domain. Disordered regions lie at residues 482 to 559 (DSIP…NDTR) and 571 to 591 (EEEFEKRLTGSQSKFKEAAAD). The segment covering 485–513 (PFKDKNREKQRQKQLEQQRKEREESEGKK) has biased composition (basic and acidic residues). A coiled-coil region spans residues 486 to 542 (FKDKNREKQRQKQLEQQRKEREESEGKKKFIKNKSWSKQKAKREKKRKLTAKRKREE). Over residues 514 to 538 (KFIKNKSWSKQKAKREKKRKLTAKR) the composition is skewed to basic residues. The tract at residues 533–562 (KLTAKRKREEGSDMEDEDMEELLNDTRLLK) is important for nuclear localization. A compositionally biased stretch (acidic residues) spans 544–555 (SDMEDEDMEELL).

Belongs to the DEAD box helicase family. DDX55/SPB4 subfamily. As to quaternary structure, interacts with 28S rRNA. Interacts with double-stranded RNA substrates in vitro; the interaction stimulates ATPase activity.

It is found in the nucleus. Its subcellular location is the nucleoplasm. It catalyses the reaction ATP + H2O = ADP + phosphate + H(+). In terms of biological role, probable ATP-binding RNA helicase. Has ATPase activity and is involved in the maturation of precursor large subunit rRNAs. The protein is ATP-dependent RNA helicase DDX55 (DDX55) of Gallus gallus (Chicken).